Here is a 285-residue protein sequence, read N- to C-terminus: S-methyl-5'-thioadenosine phosphorylase (285 aa).

Residues S10, R52 to H53, and T85 to A86 each bind phosphate. Residue M188 participates in substrate binding. Residue T189 participates in phosphate binding. Residue D212–D214 participates in substrate binding.

The protein belongs to the PNP/MTAP phosphorylase family. MTAP subfamily. As to quaternary structure, homotrimer.

It is found in the cytoplasm. Its subcellular location is the nucleus. The enzyme catalyses S-methyl-5'-thioadenosine + phosphate = 5-(methylsulfanyl)-alpha-D-ribose 1-phosphate + adenine. Its pathway is amino-acid biosynthesis; L-methionine biosynthesis via salvage pathway; S-methyl-5-thio-alpha-D-ribose 1-phosphate from S-methyl-5'-thioadenosine (phosphorylase route): step 1/1. Functionally, catalyzes the reversible phosphorylation of S-methyl-5'-thioadenosine (MTA) to adenine and 5-methylthioribose-1-phosphate. Involved in the breakdown of MTA, a major by-product of polyamine biosynthesis. Responsible for the first step in the methionine salvage pathway after MTA has been generated from S-adenosylmethionine. Has broad substrate specificity with 6-aminopurine nucleosides as preferred substrates. This Caenorhabditis briggsae protein is S-methyl-5'-thioadenosine phosphorylase.